The following is a 140-amino-acid chain: Neurotrophin-7 (140 aa).

The propeptide occupies 1–7 (PGPRVRR). Disulfide bonds link Cys21/Cys101, Cys64/Cys129, and Cys89/Cys131.

It belongs to the NGF-beta family.

It is found in the secreted. This chain is Neurotrophin-7 (ntf7), found in Cyprinus carpio (Common carp).